A 425-amino-acid chain; its full sequence is Serine hydroxymethyltransferase (425 aa).

Residues Leu123 and 127–129 (GHL) contribute to the (6S)-5,6,7,8-tetrahydrofolate site. Lys232 is subject to N6-(pyridoxal phosphate)lysine. Glu248 is a (6S)-5,6,7,8-tetrahydrofolate binding site.

The protein belongs to the SHMT family. As to quaternary structure, homodimer. It depends on pyridoxal 5'-phosphate as a cofactor.

It localises to the cytoplasm. It carries out the reaction (6R)-5,10-methylene-5,6,7,8-tetrahydrofolate + glycine + H2O = (6S)-5,6,7,8-tetrahydrofolate + L-serine. The protein operates within one-carbon metabolism; tetrahydrofolate interconversion. It functions in the pathway amino-acid biosynthesis; glycine biosynthesis; glycine from L-serine: step 1/1. Functionally, catalyzes the reversible interconversion of serine and glycine with tetrahydrofolate (THF) serving as the one-carbon carrier. This reaction serves as the major source of one-carbon groups required for the biosynthesis of purines, thymidylate, methionine, and other important biomolecules. Also exhibits THF-independent aldolase activity toward beta-hydroxyamino acids, producing glycine and aldehydes, via a retro-aldol mechanism. The protein is Serine hydroxymethyltransferase of Anaplasma phagocytophilum (strain HZ).